The sequence spans 360 residues: Protein-glutamate methylesterase/protein-glutamine glutaminase 3 (360 aa).

The Response regulatory domain occupies 14–131; that stretch reads RVLVIDDSAT…AEGVQAYAEE (118 aa). A 4-aspartylphosphate modification is found at Asp65. The 192-residue stretch at 169-360 folds into the CheB-type methylesterase domain; the sequence is AGKDGRVVAV…AGKLMELDGA (192 aa). Catalysis depends on residues Ser181, His207, and Asp303.

It belongs to the CheB family. In terms of processing, phosphorylated by CheA. Phosphorylation of the N-terminal regulatory domain activates the methylesterase activity.

Its subcellular location is the cytoplasm. The catalysed reaction is [protein]-L-glutamate 5-O-methyl ester + H2O = L-glutamyl-[protein] + methanol + H(+). It carries out the reaction L-glutaminyl-[protein] + H2O = L-glutamyl-[protein] + NH4(+). Its function is as follows. Involved in chemotaxis. Part of a chemotaxis signal transduction system that modulates chemotaxis in response to various stimuli. Catalyzes the demethylation of specific methylglutamate residues introduced into the chemoreceptors (methyl-accepting chemotaxis proteins or MCP) by CheR. Also mediates the irreversible deamidation of specific glutamine residues to glutamic acid. This chain is Protein-glutamate methylesterase/protein-glutamine glutaminase 3, found in Burkholderia thailandensis (strain ATCC 700388 / DSM 13276 / CCUG 48851 / CIP 106301 / E264).